A 204-amino-acid polypeptide reads, in one-letter code: UPF0637 protein SaurJH9_1166 (204 aa).

It belongs to the UPF0637 family.

This is UPF0637 protein SaurJH9_1166 from Staphylococcus aureus (strain JH9).